We begin with the raw amino-acid sequence, 1108 residues long: cGMP-inhibited 3',5'-cyclic phosphodiesterase 3B (1108 aa).

A compositionally biased stretch (basic and acidic residues) spans 1–11 (MRKDERERDTP). The tract at residues 1–32 (MRKDERERDTPAMRSPPPPPPPATATAASPPE) is disordered. The interval 1 to 32 (MRKDERERDTPAMRSPPPPPPPATATAASPPE) is interaction with RAPGEF3. Residues 14–23 (RSPPPPPPPA) show a composition bias toward pro residues. Ser-15 carries the phosphoserine modification. The next 6 membrane-spanning stretches (helical) occupy residues 73–93 (AGAR…LLGA), 114–134 (LSLS…CFLT), 144–164 (AGSW…FAAW), 175–195 (AAAA…LTLA), 204–224 (VLVL…LGAL), and 231–251 (LLSC…DHFF). Ser-279 bears the Phosphoserine; by PKB/AKT1 or PKB/AKT2 mark. Phosphoserine is present on residues Ser-280 and Ser-427. The interval 405–448 (DRKLHKGLSSKPSFPTAQLRRSSGASGLLTSEHHSRWDRSGGKR) is disordered. The segment covering 414–433 (SKPSFPTAQLRRSSGASGLL) has biased composition (polar residues). The interaction with PIK3R6 stretch occupies residues 421–445 (AQLRRSSGASGLLTSEHHSRWDRSG). Over residues 435–445 (SEHHSRWDRSG) the composition is skewed to basic and acidic residues. The PDEase domain occupies 633–1070 (PNIDQEVLLD…KIWKEIIEEE (438 aa)). The Proton donor role is filled by His-719. Residue His-719 coordinates AMP. Mg(2+) is bound by residues His-723, His-803, Asp-804, and Asp-919. 3 residues coordinate AMP: Asp-804, Asp-919, and Gln-970. The span at 999 to 1033 (EEGDDTESDDDDDDDDDDDDDDDEELDSDDEETED) shows a compositional bias: acidic residues. Positions 999–1042 (EEGDDTESDDDDDDDDDDDDDDDEELDSDDEETEDNLNPKPQRR) are disordered.

The protein belongs to the cyclic nucleotide phosphodiesterase family. PDE3 subfamily. As to quaternary structure, homodimer. Interacts with PIK3CG; regulates PDE3B activity and thereby cAMP levels in cells. Interacts with RAPGEF3 and PIK3R6; form a signaling complex that regulates phosphatidylinositol 3-kinase gamma in angiogenesis. Interacts with ABHD15; this interaction regulates PDE3B's stability and expression and, thereby, impacts the antilipolytic action of insulin. Mg(2+) serves as cofactor. The cofactor is Mn(2+). Phosphorylation at Ser-279 mediates insulin-induced activation of PDE3B. In terms of tissue distribution, abundant in adipose tissues.

It is found in the membrane. It catalyses the reaction a nucleoside 3',5'-cyclic phosphate + H2O = a nucleoside 5'-phosphate + H(+). The enzyme catalyses 3',5'-cyclic AMP + H2O = AMP + H(+). The catalysed reaction is 3',5'-cyclic GMP + H2O = GMP + H(+). Inhibited by cGMP. In terms of biological role, cyclic nucleotide phosphodiesterase with a dual-specificity for the second messengers cAMP and cGMP, which are key regulators of many important physiological processes. Regulates angiogenesis by inhibiting the cAMP-dependent guanine nucleotide exchange factor RAPGEF3 and downstream phosphatidylinositol 3-kinase gamma-mediated signaling. Controls cardiac contractility by reducing cAMP concentration in cardiocytes. This chain is cGMP-inhibited 3',5'-cyclic phosphodiesterase 3B, found in Rattus norvegicus (Rat).